Here is a 333-residue protein sequence, read N- to C-terminus: MGRPPCCDKIGVKKGPWTPEEDIILVSYIQEHGPGNWRSVPTHTGLRRCSKSCRLRWTNYLRPGIKRGNFTEHEEKMILHLQALLGNRWAAIASYLPERTDNDIKNYWNTHLKKKLKKMNDSCDSTINNGLDNKDFSISNKNTTSHQSSNSSKGQWERRLQTDINMAKQALCDALSIDKPQNPTNFSIPDLGYGPSSSSSSTTTTTTTTRNTNPYPSGVYASSAENIARLLQNFMKDTPKTSVPLPVAATEMAITTAASSPSTTEGDGEGIDHSLFSFNSIDEAEEKPKLIDHDINGLITQGSLSLFEKWLFDEQSHDMIINNMSLEGQEVLF.

HTH myb-type domains follow at residues 9-65 and 66-116; these read KIGV…RPGI and KRGN…KKKL. 2 DNA-binding regions (H-T-H motif) span residues 37-61 and 89-112; these read WRSV…TNYL and WAAI…NTHL. Positions 134–154 are enriched in polar residues; the sequence is KDFSISNKNTTSHQSSNSSKG. 2 disordered regions span residues 134-157 and 183-218; these read KDFS…GQWE and PTNF…YPSG. The span at 196–209 shows a compositional bias: low complexity; sequence SSSSSSTTTTTTTT.

Expressed in germinating seeds, rosette and cauline leaves, flower buds, open flowers, stems and developing siliques.

Its subcellular location is the nucleus. In terms of biological role, transcription activator involved in the activation of cuticular wax biosynthesis under drought stress. Binds directly to the promoters of genes involved in cuticular wax biosynthesis. Transactivates WSD1, KCS2/DAISY, CER1, CER2, FAR3 and ECR genes. Functions together with MYB96 in the activation of cuticular wax biosynthesis. The polypeptide is Transcription factor MYB94 (Arabidopsis thaliana (Mouse-ear cress)).